We begin with the raw amino-acid sequence, 681 residues long: MSLVPPLPILSPPSSNSSTTAPPPLQTQPTTPSAPPPVTPPPSPPQSPPPVVSSSPPPPVVSSPPPSSSPPPSPPVITSPPPTVASSPPPPVVIASPPPSTPATTPPAPPQTVSPPPPPDASPSPPAPTTTNPPPKPSPSPPGETPSPPGETPSPPKPSPSTPTPTTTTSPPPPPATSASPPSSNPTDPSTLAPPPTPLPVVPREKPIAKPTGPASNNGNNTLPSSSPGKSEVGTGGIVAIGVIVGLVFLSLFVMGVWFTRKRKRKDPGTFVGYTMPPSAYSSPQGSDVVLFNSRSSAPPKMRSHSGSDYMYASSDSGMVSNQRSWFSYDELSQVTSGFSEKNLLGEGGFGCVYKGVLSDGREVAVKQLKIGGSQGEREFKAEVEIISRVHHRHLVTLVGYCISEQHRLLVYDYVPNNTLHYHLHAPGRPVMTWETRVRVAAGAARGIAYLHEDCHPRIIHRDIKSSNILLDNSFEALVADFGLAKIAQELDLNTHVSTRVMGTFGYMAPEYATSGKLSEKADVYSYGVILLELITGRKPVDTSQPLGDESLVEWARPLLGQAIENEEFDELVDPRLGKNFIPGEMFRMVEAAAACVRHSAAKRPKMSQVVRALDTLEEATDITNGMRPGQSQVFDSRQQSAQIRMFQRMAFGSQDYSSDFFDRSQSHSSWGSRDQSRFVP.

Positions 1–11 (MSLVPPLPILS) are enriched in pro residues. The tract at residues 1–231 (MSLVPPLPIL…TLPSSSPGKS (231 aa)) is disordered. Topologically, residues 1-237 (MSLVPPLPIL…PGKSEVGTGG (237 aa)) are extracellular. N-linked (GlcNAc...) asparagine glycosylation is present at asparagine 16. A compositionally biased stretch (pro residues) spans 21-163 (APPPLQTQPT…SPPKPSPSTP (143 aa)). Over residues 177–191 (TSASPPSSNPTDPST) the composition is skewed to low complexity. The segment covering 192–201 (LAPPPTPLPV) has biased composition (pro residues). Residues 214-229 (PASNNGNNTLPSSSPG) show a composition bias toward polar residues. A glycan (N-linked (GlcNAc...) asparagine) is linked at asparagine 220. The helical transmembrane segment at 238–258 (IVAIGVIVGLVFLSLFVMGVW) threads the bilayer. Residues 259–681 (FTRKRKRKDP…GSRDQSRFVP (423 aa)) are Cytoplasmic-facing. The region spanning 339 to 617 (FSEKNLLGEG…SQVVRALDTL (279 aa)) is the Protein kinase domain. ATP-binding positions include 345 to 353 (LGEGGFGCV) and lysine 367. A Phosphotyrosine modification is found at tyrosine 412. Aspartate 463 acts as the Proton acceptor in catalysis. Serine 467 and serine 498 each carry phosphoserine. Residues threonine 499 and threonine 504 each carry the phosphothreonine modification. At tyrosine 512 the chain carries Phosphotyrosine.

Belongs to the protein kinase superfamily. Ser/Thr protein kinase family. In terms of assembly, interacts with KIPK1 and KIPK2 (via its cytosolic domain). As to expression, mostly expressed in seedlings, roots, inflorescence bolts and flower buds.

The protein resides in the cell membrane. The enzyme catalyses L-seryl-[protein] + ATP = O-phospho-L-seryl-[protein] + ADP + H(+). It carries out the reaction L-threonyl-[protein] + ATP = O-phospho-L-threonyl-[protein] + ADP + H(+). Could be involved in the negative regulation of root growth. The protein is Proline-rich receptor-like protein kinase PERK8 (PERK8) of Arabidopsis thaliana (Mouse-ear cress).